Consider the following 1420-residue polypeptide: DNA-directed RNA polymerase subunit beta' (1420 aa).

Cys-71, Cys-73, Cys-86, and Cys-89 together coordinate Zn(2+). Residues Asp-461, Asp-463, and Asp-465 each contribute to the Mg(2+) site. Zn(2+) is bound by residues Cys-815, Cys-889, Cys-896, and Cys-899.

The protein belongs to the RNA polymerase beta' chain family. In terms of assembly, the RNAP catalytic core consists of 2 alpha, 1 beta, 1 beta' and 1 omega subunit. When a sigma factor is associated with the core the holoenzyme is formed, which can initiate transcription. Mg(2+) serves as cofactor. The cofactor is Zn(2+).

The catalysed reaction is RNA(n) + a ribonucleoside 5'-triphosphate = RNA(n+1) + diphosphate. Its function is as follows. DNA-dependent RNA polymerase catalyzes the transcription of DNA into RNA using the four ribonucleoside triphosphates as substrates. The protein is DNA-directed RNA polymerase subunit beta' of Haemophilus ducreyi (strain 35000HP / ATCC 700724).